The following is a 356-amino-acid chain: S-adenosylmethionine:tRNA ribosyltransferase-isomerase (356 aa).

It belongs to the QueA family. Monomer.

The protein resides in the cytoplasm. The enzyme catalyses 7-aminomethyl-7-carbaguanosine(34) in tRNA + S-adenosyl-L-methionine = epoxyqueuosine(34) in tRNA + adenine + L-methionine + 2 H(+). It functions in the pathway tRNA modification; tRNA-queuosine biosynthesis. In terms of biological role, transfers and isomerizes the ribose moiety from AdoMet to the 7-aminomethyl group of 7-deazaguanine (preQ1-tRNA) to give epoxyqueuosine (oQ-tRNA). In Serratia proteamaculans (strain 568), this protein is S-adenosylmethionine:tRNA ribosyltransferase-isomerase.